Reading from the N-terminus, the 356-residue chain is Tyrosine recombinase XerS (356 aa).

A Core-binding (CB) domain is found at V16–T121. The Tyr recombinase domain occupies G169–D354. Catalysis depends on residues R210, K234, H306, R309, and H332. The active-site O-(3'-phospho-DNA)-tyrosine intermediate is the Y341.

Belongs to the 'phage' integrase family. XerS subfamily.

It localises to the cytoplasm. With respect to regulation, ftsK is required for recombination. Functionally, site-specific tyrosine recombinase, which acts by catalyzing the cutting and rejoining of the recombining DNA molecules. Essential to convert dimers of the bacterial chromosome into monomers to permit their segregation at cell division. Binds an atypical recombination dif site (difSL). Binds preferentially to the left arm and cooperatively to the right arm of difSL. This is Tyrosine recombinase XerS from Lactococcus lactis subsp. cremoris (strain MG1363).